A 210-amino-acid chain; its full sequence is Oxygen-insensitive NADPH nitroreductase (210 aa).

150–155 (GVSLMG) contacts NADP(+).

It belongs to the nitroreductase family.

Its function is as follows. Reduction of a variety of nitroaromatic compounds using NADPH as source of reducing equivalents; two electrons are transferred. This chain is Oxygen-insensitive NADPH nitroreductase (rdxA), found in Helicobacter acinonychis (strain Sheeba).